A 285-amino-acid polypeptide reads, in one-letter code: HTH-type transcriptional regulator MurR (285 aa).

The HTH rpiR-type domain occupies 1–77 (MLYLTKIRNA…MALIGEYSAS (77 aa)). Positions 37-56 (SRKMAKQLGISQSSIVKFAQ) form a DNA-binding region, H-T-H motif. Residues 128–268 (IIEVISKAPF…FVGLVQLNDV (141 aa)) enclose the SIS domain.

Homotetramer.

The protein operates within amino-sugar metabolism; N-acetylmuramate degradation [regulation]. Functionally, represses the expression of the murPQ operon involved in the uptake and degradation of N-acetylmuramic acid (MurNAc). Binds to two adjacent inverted repeats within the operator region. MurNAc 6-phosphate, the substrate of MurQ, is the specific inducer that weakens binding of MurR to the operator. The sequence is that of HTH-type transcriptional regulator MurR from Escherichia coli O7:K1 (strain IAI39 / ExPEC).